Here is a 62-residue protein sequence, read N- to C-terminus: Sperm protamine P1 (62 aa).

Residues 1-62 form a disordered region; sequence MARYRHSXSR…RYSRRRRRRY (62 aa).

Belongs to the protamine P1 family. Testis.

Its subcellular location is the nucleus. The protein resides in the chromosome. Protamines substitute for histones in the chromatin of sperm during the haploid phase of spermatogenesis. They compact sperm DNA into a highly condensed, stable and inactive complex. This chain is Sperm protamine P1 (PRM1), found in Petrogale xanthopus (Yellow-footed rock wallaby).